The primary structure comprises 100 residues: NAD(P)H-quinone oxidoreductase subunit 4L, chloroplastic (100 aa).

A run of 3 helical transmembrane segments spans residues 1–21 (MLEN…YGLT), 30–50 (LMCL…FSSF), and 60–80 (VFAI…LAII).

It belongs to the complex I subunit 4L family. In terms of assembly, NDH is composed of at least 16 different subunits, 5 of which are encoded in the nucleus.

It localises to the plastid. The protein resides in the chloroplast thylakoid membrane. It carries out the reaction a plastoquinone + NADH + (n+1) H(+)(in) = a plastoquinol + NAD(+) + n H(+)(out). The enzyme catalyses a plastoquinone + NADPH + (n+1) H(+)(in) = a plastoquinol + NADP(+) + n H(+)(out). In terms of biological role, NDH shuttles electrons from NAD(P)H:plastoquinone, via FMN and iron-sulfur (Fe-S) centers, to quinones in the photosynthetic chain and possibly in a chloroplast respiratory chain. The immediate electron acceptor for the enzyme in this species is believed to be plastoquinone. Couples the redox reaction to proton translocation, and thus conserves the redox energy in a proton gradient. The chain is NAD(P)H-quinone oxidoreductase subunit 4L, chloroplastic from Staurastrum punctulatum (Green alga).